We begin with the raw amino-acid sequence, 598 residues long: Chaperone protein DnaK (598 aa).

T180 carries the post-translational modification Phosphothreonine; by autocatalysis.

This sequence belongs to the heat shock protein 70 family.

Acts as a chaperone. The protein is Chaperone protein DnaK of Thermosipho africanus (strain TCF52B).